Reading from the N-terminus, the 87-residue chain is Small ribosomal subunit protein bS20 (87 aa).

Residues 1-20 form a disordered region; that stretch reads MANHKSAEKRARQTIKRTER.

It belongs to the bacterial ribosomal protein bS20 family.

Binds directly to 16S ribosomal RNA. The chain is Small ribosomal subunit protein bS20 from Campylobacter lari (strain RM2100 / D67 / ATCC BAA-1060).